A 191-amino-acid chain; its full sequence is Cytochrome c oxidase assembly protein CtaG (191 aa).

Topologically, residues 1–9 (MSLSPHQKT) are cytoplasmic. A helical; Signal-anchor for type II membrane protein transmembrane segment spans residues 10-30 (AGGLVLVVAVMGAASFAAVPF). Topologically, residues 31–191 (YNWFCRVTGF…LAAESATDVN (161 aa)) are periplasmic.

The protein belongs to the COX11/CtaG family.

Its subcellular location is the cell inner membrane. Exerts its effect at some terminal stage of cytochrome c oxidase synthesis, probably by being involved in the insertion of the copper B into subunit I. This is Cytochrome c oxidase assembly protein CtaG from Cereibacter sphaeroides (strain ATCC 17029 / ATH 2.4.9) (Rhodobacter sphaeroides).